A 1767-amino-acid polypeptide reads, in one-letter code: Endo-alpha-N-acetylgalactosaminidase (1767 aa).

Residues 1 to 39 (MNKGLFEKRCKYSIRKFSLGVASVMIGATFFGTSPVLAD) form the signal peptide. 2 stretches are compositionally biased toward basic and acidic residues: residues 63-75 (NDGH…KVGE) and 84-111 (DGPK…DKPA). 2 disordered regions span residues 63 to 137 (NDGH…QGTV) and 301 to 324 (VKTD…GPEV). The segment covering 112–124 (AAKPETPKTVTPE) has biased composition (low complexity). Composition is skewed to basic and acidic residues over residues 127–137 (TVEKKEQQGTV) and 304–324 (DNQE…GPEV). Residues Asp-577, Asn-579, Asp-581, Lys-583, and Asp-588 each coordinate Ca(2+). Positions 602-893 (GWKKVKDITA…DVMTKYFQHF (292 aa)) are catalytic. Asp-658 is a substrate binding site. Residue Asp-764 is the Nucleophile of the active site. Glu-796 (proton donor/acceptor) is an active-site residue. Residues Asp-1233, Glu-1235, Glu-1281, Trp-1284, and Asp-1411 each coordinate Ca(2+). The LPXTG sorting signal motif lies at 1735-1739 (LPATG). Thr-1738 carries the post-translational modification Pentaglycyl murein peptidoglycan amidated threonine. A propeptide spans 1739–1767 (GESQFDTALFLASVSLALSALFVVKTKKD) (removed by sortase).

It belongs to the glycosyl hydrolase 101 family. A subfamily.

It is found in the secreted. Its subcellular location is the cell wall. It catalyses the reaction a 3-O-[beta-D-galactosyl-(1-&gt;3)-N-acetyl-alpha-D-galactosaminyl]-L-threonyl-[protein] + H2O = beta-D-galactosyl-(1-&gt;3)-N-acetyl-D-galactosamine + L-threonyl-[protein]. It carries out the reaction a 3-O-[beta-D-galactosyl-(1-&gt;3)-N-acetyl-alpha-D-galactosaminyl]-L-seryl-[protein] + H2O = beta-D-galactosyl-(1-&gt;3)-N-acetyl-D-galactosamine + L-seryl-[protein]. Functionally, involved in the breakdown of mucin-type O-linked glycans. Specifically removes the T-antigen disaccharide (Gal-beta-1,3-GalNAc-alpha) from extracellular host glycoproteins. Representative of a broadly important class of virulence factors. In Streptococcus pneumoniae (strain ATCC BAA-255 / R6), this protein is Endo-alpha-N-acetylgalactosaminidase.